Here is a 376-residue protein sequence, read N- to C-terminus: tRNA-specific 2-thiouridylase MnmA (376 aa).

ATP-binding positions include 19–26 and M45; that span reads GMSGGVDS. Residues 105–107 form an interaction with target base in tRNA region; it reads NPD. The active-site Nucleophile is the C110. A disulfide bridge connects residues C110 and C210. ATP is bound at residue G134. An interaction with tRNA region spans residues 160–162; that stretch reads KDQ. Residue C210 is the Cysteine persulfide intermediate of the active site. The interaction with tRNA stretch occupies residues 326–327; the sequence is RY.

The protein belongs to the MnmA/TRMU family.

The protein localises to the cytoplasm. It carries out the reaction S-sulfanyl-L-cysteinyl-[protein] + uridine(34) in tRNA + AH2 + ATP = 2-thiouridine(34) in tRNA + L-cysteinyl-[protein] + A + AMP + diphosphate + H(+). Functionally, catalyzes the 2-thiolation of uridine at the wobble position (U34) of tRNA, leading to the formation of s(2)U34. In Bordetella petrii (strain ATCC BAA-461 / DSM 12804 / CCUG 43448), this protein is tRNA-specific 2-thiouridylase MnmA.